The primary structure comprises 246 residues: UDP-N-acetyl-D-mannosaminuronic acid transferase (246 aa).

Belongs to the glycosyltransferase 26 family.

The catalysed reaction is UDP-N-acetyl-alpha-D-mannosaminouronate + N-acetyl-alpha-D-glucosaminyl-di-trans,octa-cis-undecaprenyl diphosphate = beta-D-ManNAcA-(1-&gt;4)-alpha-D-GlcNAc-di-trans,octa-cis-undecaprenyl diphosphate + UDP + H(+). The protein operates within bacterial outer membrane biogenesis; enterobacterial common antigen biosynthesis. In terms of biological role, catalyzes the synthesis of Und-PP-GlcNAc-ManNAcA (Lipid II), the second lipid-linked intermediate involved in enterobacterial common antigen (ECA) synthesis. The sequence is that of UDP-N-acetyl-D-mannosaminuronic acid transferase from Salmonella arizonae (strain ATCC BAA-731 / CDC346-86 / RSK2980).